The following is a 356-amino-acid chain: Probable arabinogalactan endo-beta-1,4-galactanase A (356 aa).

An N-terminal signal peptide occupies residues 1-21 (MLGKMILLPLFVLLCHSLASA). Asn-133 carries N-linked (GlcNAc...) asparagine glycosylation. Glu-157 serves as the catalytic Proton donor. The active-site Nucleophile is the Glu-268.

This sequence belongs to the glycosyl hydrolase 53 family.

The protein resides in the secreted. It catalyses the reaction The enzyme specifically hydrolyzes (1-&gt;4)-beta-D-galactosidic linkages in type I arabinogalactans.. Endogalactanase involved in the degradation of plant cell wall polysaccharides, and more particularly of hairy regions of pectin. In Neosartorya fischeri (strain ATCC 1020 / DSM 3700 / CBS 544.65 / FGSC A1164 / JCM 1740 / NRRL 181 / WB 181) (Aspergillus fischerianus), this protein is Probable arabinogalactan endo-beta-1,4-galactanase A (galA).